The following is an 81-amino-acid chain: Sulfur carrier protein TusA (81 aa).

C20 acts as the Cysteine persulfide intermediate in catalysis.

It belongs to the sulfur carrier protein TusA family.

The protein localises to the cytoplasm. Its function is as follows. Sulfur carrier protein which probably makes part of a sulfur-relay system. The polypeptide is Sulfur carrier protein TusA (Colwellia psychrerythraea (strain 34H / ATCC BAA-681) (Vibrio psychroerythus)).